Reading from the N-terminus, the 124-residue chain is Small ribosomal subunit protein uS12 (124 aa).

At D89 the chain carries 3-methylthioaspartic acid.

It belongs to the universal ribosomal protein uS12 family. As to quaternary structure, part of the 30S ribosomal subunit. Contacts proteins S8 and S17. May interact with IF1 in the 30S initiation complex.

With S4 and S5 plays an important role in translational accuracy. Its function is as follows. Interacts with and stabilizes bases of the 16S rRNA that are involved in tRNA selection in the A site and with the mRNA backbone. Located at the interface of the 30S and 50S subunits, it traverses the body of the 30S subunit contacting proteins on the other side and probably holding the rRNA structure together. The combined cluster of proteins S8, S12 and S17 appears to hold together the shoulder and platform of the 30S subunit. This is Small ribosomal subunit protein uS12 from Shewanella baltica (strain OS223).